A 576-amino-acid chain; its full sequence is uncharacterized protein (576 aa).

At Met-1–Ala-8 the chain is on the cytoplasmic side. A helical transmembrane segment spans residues Ile-9 to Val-29. Residues Ala-30–Asn-45 lie on the Extracellular side of the membrane. Residues Met-46–Trp-66 traverse the membrane as a helical segment. At Arg-67–Glu-71 the chain is on the cytoplasmic side. Residues Ile-72–Phe-92 traverse the membrane as a helical segment. Topologically, residues Thr-93–Phe-103 are extracellular. The chain crosses the membrane as a helical span at residues Phe-104–Ile-124. At Gln-125–Gly-141 the chain is on the cytoplasmic side. A helical membrane pass occupies residues Val-142–Trp-162. Topologically, residues Arg-163 to Ser-400 are extracellular. Residues Leu-401–Thr-421 form a helical membrane-spanning segment. Topologically, residues Thr-422–Asn-437 are cytoplasmic. The helical transmembrane segment at Phe-438 to Leu-458 threads the bilayer. The Extracellular portion of the chain corresponds to Gly-459–Lys-476. Residues Ser-477–Val-497 form a helical membrane-spanning segment. Residues Asn-498 to Lys-512 are Cytoplasmic-facing. The chain crosses the membrane as a helical span at residues Phe-513–Phe-533. The Extracellular portion of the chain corresponds to Tyr-534 to Asn-545. The chain crosses the membrane as a helical span at residues Cys-546–Val-566. Residues Thr-567–Val-576 lie on the Cytoplasmic side of the membrane.

This sequence belongs to the auxin efflux carrier (TC 2.A.69) family.

The protein resides in the membrane. This is an uncharacterized protein from Saccharomyces cerevisiae (strain ATCC 204508 / S288c) (Baker's yeast).